The primary structure comprises 61 residues: Small ribosomal subunit protein uS14 (61 aa).

Residues C24, C27, C40, and C43 each contribute to the Zn(2+) site.

This sequence belongs to the universal ribosomal protein uS14 family. Zinc-binding uS14 subfamily. Part of the 30S ribosomal subunit. Contacts proteins S3 and S10. It depends on Zn(2+) as a cofactor.

In terms of biological role, binds 16S rRNA, required for the assembly of 30S particles and may also be responsible for determining the conformation of the 16S rRNA at the A site. This Geobacter sp. (strain M21) protein is Small ribosomal subunit protein uS14.